Here is a 1092-residue protein sequence, read N- to C-terminus: MCRDEPDTMILTQIEAKEACDWLRVTGFPQYAQLYEDLLFPVDIALVKREHDFLDRDAIEALCRRLNTLNKCAVMKLEISPHRKRSEDSDEDEPCAISGKWTFQRDSKRWSRLEEFDVFFPKQDPIPGSPDNSRLQSATSHESMLTDLSEHQEVASVRSLSSTSSSVPTHAAHSGDATTPRTNSVISVCSSGHFVGNDDSFSSLPSPKELSSFSFSMKGHHEKNTKSKTRSLLKRMESLKLKGSHHSKHKAPSKLGLIISAPILQEGMDEAKLKQLNCVEISALNGNHINVPMVRKRSVSNSTQTSSSSSQSETSSAVSTPSPVTRTRSLSTCNKRVGMYLEGFDPFSQSTLNNVTEQNYKNRESYPEDTVFYIPEDHKPGTFPKALSHGSFCPSGNSSVNWRTGSFHGPGHLSLRRENSHDSPKELKRRNSSSSLSSRLSIYDNVPGSILYSSSGELADLENEDIFPELDDILYHVKGMQRIVNQWSEKFSDEGDSDSALDSVSPCPSSPKQIHLDVDHDRRTPSDLDSTGNSLNEPEEPTDIPERRDSGVGASLTRCNRHRLRWHSFQSSHRPSLNSVSLQINCQSVAQMNLLQKYSLLKLTALLEKYTPSNKHGFSWAVPKFMKRIKVPDYKDRSVFGVPLTVNVQRSGQPLPQSIQQAMRYLRNHCLDQVGLFRKSGVKSRIQALRQMNESAEDNVNYEGQSAYDVADMLKQYFRDLPEPLMTNKLSETFLQIYQYVPKDQRLQAIKAAIMLLPDENREVLQTLLYFLSDVTAAVKENQMTPTNLAVCLAPSLFHLNTLKRENSSPRVMQRKQSLGKPDQKDLNENLAATQGLAHMIAECKKLFQVPEEMSRCRNSYTEQELKPLTLEALGHLNSDQPADYRHFLQDCVDGLFKEVKEKFKGWVSYPTSEQADLSYKKVSEGPPLRLWRSTIEVPAAPEEILKRLLKEQHLWDVDLLDSKVIEILDSQTEIYQYVQNSMAPHPARDYVVLRTWRTNLPRGACALLLTSVDHDRAPVAGVRVNVLLSRYLIEPCGSGKSKLTYMCRADLRGHMPEWYSKSFGHLCAAEVVKIRDSFSNQNTESKDTRSR.

One can recognise an SAM domain in the interval 11 to 78 (LTQIEAKEAC…LNKCAVMKLE (68 aa)). A phosphoserine mark is found at Ser-86, Ser-89, and Ser-129. Disordered regions lie at residues 121–179 (PKQD…DATT), 297–330 (RSVSNSTQTSSSSSQSETSSAVSTPSPVTRTRSL), 409–434 (GPGHLSLRRENSHDSPKELKRRNSSS), and 492–553 (SDEG…SGVG). Positions 130-143 (PDNSRLQSATSHES) are enriched in polar residues. Composition is skewed to low complexity over residues 154 to 174 (VASVRSLSSTSSSVPTHAAHS) and 299 to 325 (VSNSTQTSSSSSQSETSSAVSTPSPVT). Positions 275-448 (QLNCVEISAL…RLSIYDNVPG (174 aa)) are focal adhesion-targeting (FAT). At Ser-322 the chain carries Phosphoserine. The span at 415 to 426 (LRRENSHDSPKE) shows a compositional bias: basic and acidic residues. The segment covering 500-512 (ALDSVSPCPSSPK) has biased composition (polar residues). Residues 514-526 (IHLDVDHDRRTPS) show a composition bias toward basic and acidic residues. A compositionally biased stretch (polar residues) spans 527-536 (DLDSTGNSLN). The polybasic cluster (PBR) stretch occupies residues 615–637 (KHGFSWAVPKFMKRIKVPDYKDR). Residues 642 to 848 (VPLTVNVQRS…HMIAECKKLF (207 aa)) form the Rho-GAP domain. An START domain is found at 878–1085 (NSDQPADYRH…RDSFSNQNTE (208 aa)).

As to quaternary structure, interacts with EF1A1, facilitates EF1A1 distribution to the membrane periphery and ruffles upon growth factor stimulation and suppresses cell migration. Interacts with tensin TNS1 (via N-terminus); the interaction is decreased by phosphorylation of TNS1. Interacts with TNS3 and PTEN; in resting cells, interacts with TNS3 (via C2 tensin-type domain) but, following growth factor stimulation, TNS3 and PTEN are phosphorylated which leads to weakened interaction with TNS3 and enhanced interaction with PTEN. Interacts (via C-terminus) with tensin TNS4 (via SH2 domain); the interaction is independent of tyrosine phosphorylation of DLC1. Widely expressed with the highest levels in heart, liver and lung.

The protein localises to the cytoplasm. Its subcellular location is the cell junction. It is found in the focal adhesion. The protein resides in the membrane. Functionally, functions as a GTPase-activating protein for the small GTPases RHOA, RHOB, RHOC and CDC42, terminating their downstream signaling. This induces morphological changes and detachment through cytoskeletal reorganization, playing a critical role in biological processes such as cell migration and proliferation. Also functions in vivo as an activator of the phospholipase PLCD1. Active DLC1 increases cell migration velocity but reduces directionality. Required for growth factor-induced epithelial cell migration; in resting cells, interacts with TNS3 while PTEN interacts with the p85 regulatory subunit of the PI3K kinase complex but growth factor stimulation induces phosphorylation of TNS3 and PTEN, causing them to change their binding preference so that PTEN interacts with DLC1 and TNS3 interacts with p85. The PTEN-DLC1 complex translocates to the posterior of migrating cells to activate RHOA while the TNS3-p85 complex translocates to the leading edge of migrating cells to promote RAC1 activation. This is Rho GTPase-activating protein 7 (Dlc1) from Mus musculus (Mouse).